The chain runs to 902 residues: Tiger protein B1 (902 aa).

The N-terminal stretch at 1 to 24 (MKVIYIYLLLLLVCKFLFVKSSCS) is a signal peptide. The Extracellular portion of the chain corresponds to 25-803 (LKVGKIECTK…IIYSENKSTG (779 aa)). Residues Asn43, Asn144, Asn184, Asn223, Asn272, Asn279, Asn288, Asn358, Asn389, Asn398, Asn437, Asn559, Asn628, Asn644, Asn706, Asn753, Asn764, Asn771, and Asn799 are each glycosylated (N-linked (GlcNAc...) asparagine). Residues 249–323 (MEGVLNDNGG…ITIDGEYKSN (75 aa)) form the IPT/TIG 1 domain. 2 consecutive IPT/TIG domains span residues 603–680 (PIIE…ISSS) and 704–788 (ITNT…IFQF). The helical transmembrane segment at 804-824 (FPNEMYLGFVVFVIFIALISF) threads the bilayer. Residues 825 to 902 (AAKNQIEKYF…IRRCFKEHTD (78 aa)) are Cytoplasmic-facing.

Its subcellular location is the cell membrane. In terms of biological role, tgrB1 and tgrC1 are involved in kin discrimination. They play an essential role in aggregation and subsequent development. This is Tiger protein B1 (tgrB1) from Dictyostelium discoideum (Social amoeba).